The following is a 247-amino-acid chain: Adenosylcobinamide-GDP ribazoletransferase (247 aa).

A run of 4 helical transmembrane segments spans residues 34–54 (IITF…VFMV), 59–79 (CGVP…TGGF), 113–133 (GGLA…ELAL), and 194–214 (VLLP…AIFI).

It belongs to the CobS family. It depends on Mg(2+) as a cofactor.

The protein resides in the cell inner membrane. It catalyses the reaction alpha-ribazole + adenosylcob(III)inamide-GDP = adenosylcob(III)alamin + GMP + H(+). The catalysed reaction is alpha-ribazole 5'-phosphate + adenosylcob(III)inamide-GDP = adenosylcob(III)alamin 5'-phosphate + GMP + H(+). It functions in the pathway cofactor biosynthesis; adenosylcobalamin biosynthesis; adenosylcobalamin from cob(II)yrinate a,c-diamide: step 7/7. Functionally, joins adenosylcobinamide-GDP and alpha-ribazole to generate adenosylcobalamin (Ado-cobalamin). Also synthesizes adenosylcobalamin 5'-phosphate from adenosylcobinamide-GDP and alpha-ribazole 5'-phosphate. This Escherichia coli (strain ATCC 8739 / DSM 1576 / NBRC 3972 / NCIMB 8545 / WDCM 00012 / Crooks) protein is Adenosylcobinamide-GDP ribazoletransferase.